A 256-amino-acid chain; its full sequence is Triosephosphate isomerase (256 aa).

10-12 is a substrate binding site; the sequence is NWK. H96 (electrophile) is an active-site residue. E168 functions as the Proton acceptor in the catalytic mechanism. Substrate contacts are provided by G174 and S213.

This sequence belongs to the triosephosphate isomerase family. Homodimer.

It localises to the cytoplasm. The enzyme catalyses D-glyceraldehyde 3-phosphate = dihydroxyacetone phosphate. The protein operates within carbohydrate biosynthesis; gluconeogenesis. Its pathway is carbohydrate degradation; glycolysis; D-glyceraldehyde 3-phosphate from glycerone phosphate: step 1/1. In terms of biological role, involved in the gluconeogenesis. Catalyzes stereospecifically the conversion of dihydroxyacetone phosphate (DHAP) to D-glyceraldehyde-3-phosphate (G3P). In Wigglesworthia glossinidia brevipalpis, this protein is Triosephosphate isomerase.